Here is a 964-residue protein sequence, read N- to C-terminus: Collagen alpha-1(I) chain (964 aa).

The disordered stretch occupies residues 1–964; sequence GGISVPGPMG…PGPPGPPGPP (964 aa). Residues proline 18, proline 21, proline 24, proline 33, proline 36, proline 39, proline 53, proline 68, proline 74, proline 83, and proline 89 each carry the 4-hydroxyproline modification. Residues 56–70 show a composition bias toward basic and acidic residues; sequence NGDDGEAGKPGRPGE. Lysine 92 carries the 5-hydroxylysine; alternate modification. A glycan (O-linked (Gal...) hydroxylysine; alternate) is linked at lysine 92. At serine 98 the chain carries Phosphoserine. Low complexity-rich tracts occupy residues 106–117 and 126–144; these read DAGPAGPKQMGP and PGAS…TGAA. 4-hydroxyproline is present on residues proline 126, proline 147, proline 156, proline 159, proline 186, proline 189, proline 201, proline 207, proline 216, proline 222, proline 225, and proline 240. Residues 146–158 are compositionally biased toward pro residues; sequence PPGPTGPAGPPGF. Positions 192–231 are enriched in low complexity; that stretch reads AGAAGPAGNPGADGQPGAKGANGAPGIAGAPGFPGARGPS. Lysine 243 bears the 5-hydroxylysine mark. Proline 249, proline 252, proline 260, proline 269, proline 284, proline 290, proline 299, and proline 305 each carry 4-hydroxyproline. Positions 294 to 303 are enriched in gly residues; sequence GERGGPGSRG. Lysine 314 is modified (5-hydroxylysine). Residues proline 323, proline 332, proline 338, proline 344, proline 353, proline 356, proline 365, proline 374, proline 379, proline 391, proline 400, proline 409, proline 412, proline 430, proline 447, proline 453, proline 459, proline 465, proline 471, proline 477, proline 489, proline 498, proline 510, and proline 519 each carry the 4-hydroxyproline modification. Residues 347-373 are compositionally biased toward low complexity; it reads KGLTGSPGSPGPDGKTGPPGPAGQDGR. The segment covering 381–400 has biased composition (low complexity); the sequence is ARGQAGVMGFPGPKGAAGEP. The segment covering 459 to 468 has biased composition (low complexity); sequence PGEAGKPGEQ. At lysine 531 the chain carries 5-hydroxylysine. 4-hydroxyproline is present on residues proline 537, proline 552, and proline 558. Residues 564 to 578 show a composition bias toward low complexity; sequence SGPSGPAGPTGARGA. The residue at position 567 (serine 567) is a Phosphoserine. A 4-hydroxyproline mark is found at proline 579, proline 585, proline 588, proline 597, proline 603, proline 621, proline 630, and proline 639. Low complexity predominate over residues 591–618; the sequence is AGFAGPPGADGQPGAKGEPGDAGAKGDA. The span at 620–632 shows a compositional bias: pro residues; it reads PPGPAGPTGPPGP. Position 642 is a 5-hydroxylysine (lysine 642). A compositionally biased stretch (low complexity) spans 647-663; that stretch reads SAGPPGATGFPGAAGRV. Residues proline 651 and proline 657 each carry the 4-hydroxyproline modification. Proline 665 is subject to 3-hydroxyproline. A 4-hydroxyproline mark is found at proline 666, proline 675, proline 678, proline 704, proline 712, proline 721, proline 739, proline 748, proline 751, proline 757, proline 772, proline 778, proline 784, proline 792, and proline 798. A compositionally biased stretch (low complexity) spans 709 to 721; the sequence is KGSPGADGPAGAP. Pro residues predominate over residues 771-781; sequence PPGPMGPPGLA. Residue lysine 807 is modified to 5-hydroxylysine. Positions 815 to 830 are enriched in pro residues; it reads PGPPGAPGAPGAPGPV. Proline 818, proline 821, and proline 824 each carry 4-hydroxyproline. Residues 850-864 are compositionally biased toward low complexity; sequence AGPAGARGPAGPQGP. Over residues 865–879 the composition is skewed to basic and acidic residues; the sequence is RGDKGETGEQGDRGI. 5-hydroxylysine is present on lysine 868. Position 880 is a 5-hydroxylysine; alternate (lysine 880). O-linked (Gal...) hydroxylysine; alternate glycosylation is present at lysine 880. Residues proline 895, proline 898, proline 916, and proline 931 each carry the 4-hydroxyproline modification. The span at 898–931 shows a compositional bias: low complexity; the sequence is PGEQGPSGASGPAGPRGPPGSAGSPGKDGLNGLP. The residue at position 936 (proline 936) is a 3-hydroxyproline. Proline 937 is subject to 4-hydroxyproline. Residues 949–964 are compositionally biased toward pro residues; it reads VGPPGPPGPPGPPGPP. 3-hydroxyproline is present on proline 951. Proline 952 carries the post-translational modification 4-hydroxyproline. The residue at position 954 (proline 954) is a 3-hydroxyproline. Position 955 is a 4-hydroxyproline (proline 955). Position 957 is a 3-hydroxyproline (proline 957). Proline 958, proline 961, and proline 964 each carry 4-hydroxyproline.

Belongs to the fibrillar collagen family. Trimers of one alpha 2(I) and two alpha 1(I) chains. Post-translationally, contains mostly 4-hydroxyproline. Proline residues at the third position of the tripeptide repeating unit (G-X-Y) are hydroxylated in some or all of the chains. In terms of processing, contains 3-hydroxyproline at a few sites. This modification occurs on the first proline residue in the sequence motif Gly-Pro-Hyp, where Hyp is 4-hydroxyproline. Lysine residues at the third position of the tripeptide repeating unit (G-X-Y) are 5-hydroxylated in some or all of the chains. Post-translationally, O-glycosylated on hydroxylated lysine residues. The O-linked glycan consists of a Glc-Gal disaccharide. Expressed in bones.

It localises to the secreted. The protein resides in the extracellular space. The protein localises to the extracellular matrix. Its function is as follows. Type I collagen is a member of group I collagen (fibrillar forming collagen). In Parocnus serus (Greater Haitian ground sloth), this protein is Collagen alpha-1(I) chain.